Reading from the N-terminus, the 96-residue chain is Co-chaperonin GroES (96 aa).

It belongs to the GroES chaperonin family. In terms of assembly, heptamer of 7 subunits arranged in a ring. Interacts with the chaperonin GroEL.

It localises to the cytoplasm. Its function is as follows. Together with the chaperonin GroEL, plays an essential role in assisting protein folding. The GroEL-GroES system forms a nano-cage that allows encapsulation of the non-native substrate proteins and provides a physical environment optimized to promote and accelerate protein folding. GroES binds to the apical surface of the GroEL ring, thereby capping the opening of the GroEL channel. The sequence is that of Co-chaperonin GroES from Caulobacter sp. (strain K31).